Consider the following 624-residue polypeptide: 1-deoxy-D-xylulose-5-phosphate synthase (624 aa).

Residues His-80 and 121–123 (GHS) each bind thiamine diphosphate. Residue Asp-152 participates in Mg(2+) binding. Thiamine diphosphate-binding positions include 153–154 (GA), Asn-181, Tyr-289, and Glu-371. Asn-181 lines the Mg(2+) pocket.

Belongs to the transketolase family. DXPS subfamily. As to quaternary structure, homodimer. Mg(2+) is required as a cofactor. The cofactor is thiamine diphosphate.

The catalysed reaction is D-glyceraldehyde 3-phosphate + pyruvate + H(+) = 1-deoxy-D-xylulose 5-phosphate + CO2. It functions in the pathway metabolic intermediate biosynthesis; 1-deoxy-D-xylulose 5-phosphate biosynthesis; 1-deoxy-D-xylulose 5-phosphate from D-glyceraldehyde 3-phosphate and pyruvate: step 1/1. In terms of biological role, catalyzes the acyloin condensation reaction between C atoms 2 and 3 of pyruvate and glyceraldehyde 3-phosphate to yield 1-deoxy-D-xylulose-5-phosphate (DXP). This Blochmanniella pennsylvanica (strain BPEN) protein is 1-deoxy-D-xylulose-5-phosphate synthase.